The sequence spans 361 residues: UPF0283 membrane protein mlr0776 (361 aa).

Residues 1-33 (MTAPRKPAAFRIEPEAAPTQETPKARQAELSRK) form a disordered region. The segment covering 23-32 (PKARQAELSR) has biased composition (basic and acidic residues). Transmembrane regions (helical) follow at residues 73-93 (LFGSIFFGAIGVLVSLAVGLW) and 108-128 (LGWLAAGMAAIAVLALVVILI).

Belongs to the UPF0283 family.

It is found in the cell inner membrane. This Mesorhizobium japonicum (strain LMG 29417 / CECT 9101 / MAFF 303099) (Mesorhizobium loti (strain MAFF 303099)) protein is UPF0283 membrane protein mlr0776.